Here is a 398-residue protein sequence, read N- to C-terminus: 1-deoxy-D-xylulose 5-phosphate reductoisomerase (398 aa).

Residues Thr10, Gly11, Ser12, Val13, Gly36, Lys37, Asn38, and Asn124 each coordinate NADPH. Lys125 contacts 1-deoxy-D-xylulose 5-phosphate. Residue Glu126 coordinates NADPH. Asp150 lines the Mn(2+) pocket. Residues Ser151, Glu152, Ser186, and His209 each contribute to the 1-deoxy-D-xylulose 5-phosphate site. Glu152 provides a ligand contact to Mn(2+). Gly215 contacts NADPH. 1-deoxy-D-xylulose 5-phosphate is bound by residues Ser222, Asn227, Lys228, and Glu231. Residue Glu231 participates in Mn(2+) binding.

It belongs to the DXR family. As to quaternary structure, homodimer. It depends on Mg(2+) as a cofactor. Mn(2+) serves as cofactor.

It carries out the reaction 2-C-methyl-D-erythritol 4-phosphate + NADP(+) = 1-deoxy-D-xylulose 5-phosphate + NADPH + H(+). It participates in isoprenoid biosynthesis; isopentenyl diphosphate biosynthesis via DXP pathway; isopentenyl diphosphate from 1-deoxy-D-xylulose 5-phosphate: step 1/6. Catalyzes the NADPH-dependent rearrangement and reduction of 1-deoxy-D-xylulose-5-phosphate (DXP) to 2-C-methyl-D-erythritol 4-phosphate (MEP). This is 1-deoxy-D-xylulose 5-phosphate reductoisomerase from Photorhabdus laumondii subsp. laumondii (strain DSM 15139 / CIP 105565 / TT01) (Photorhabdus luminescens subsp. laumondii).